The sequence spans 232 residues: Vesicle transport through interaction with t-SNAREs homolog 1B (232 aa).

Alanine 2 carries the post-translational modification N-acetylalanine. Interaction with CLINT1 stretches follow at residues 2–23 and 69–73; these read AASA…GLLE and APLTF. The Cytoplasmic portion of the chain corresponds to 2 to 208; it reads AASAASSEHF…SRKVITNKLL (207 aa). A coiled-coil region spans residues 36–98; that stretch reads AGTEEKKKLV…AKLHREVRST (63 aa). Arginine 107 carries the omega-N-methylarginine modification. Serine 138 is modified (phosphoserine). The stretch at 160–201 forms a coiled coil; sequence GTEIIEELGEQRDQLERTKSRLVNTNENLSKSRKILRSMSRK. Residues 209–229 form a helical; Anchor for type IV membrane protein membrane-spanning segment; the sequence is LSVIILLELAILVGLVYYKFF. The Vesicular segment spans residues 230–232; it reads RHH.

This sequence belongs to the VTI1 family. In terms of assembly, forms a SNARE complex with STX7, STX8 and VAMP8 which functions in the homotypic fusion of late endosomes. Component of the SNARE complex composed of STX7, STX8, VAMP7 and VIT1B that is required for heterotypic fusion of late endosomes with lysosomes. May interact with STX17. Interacts with CLINT1. Broadly expressed.

Its subcellular location is the early endosome membrane. It is found in the late endosome membrane. It localises to the lysosome membrane. The protein resides in the cytoplasmic granule. The protein localises to the recycling endosome membrane. Functionally, V-SNARE that mediates vesicle transport pathways through interactions with t-SNAREs on the target membrane. These interactions are proposed to mediate aspects of the specificity of vesicle trafficking and to promote fusion of the lipid bilayers. In Mus musculus (Mouse), this protein is Vesicle transport through interaction with t-SNAREs homolog 1B (Vti1b).